The primary structure comprises 433 residues: ATP-dependent protease ATPase subunit HslU (433 aa).

Residues Val-18, 60–65, Asp-246, Glu-311, and Arg-383 each bind ATP; that span reads GVGKTE.

This sequence belongs to the ClpX chaperone family. HslU subfamily. A double ring-shaped homohexamer of HslV is capped on each side by a ring-shaped HslU homohexamer. The assembly of the HslU/HslV complex is dependent on binding of ATP.

Its subcellular location is the cytoplasm. Functionally, ATPase subunit of a proteasome-like degradation complex; this subunit has chaperone activity. The binding of ATP and its subsequent hydrolysis by HslU are essential for unfolding of protein substrates subsequently hydrolyzed by HslV. HslU recognizes the N-terminal part of its protein substrates and unfolds these before they are guided to HslV for hydrolysis. This chain is ATP-dependent protease ATPase subunit HslU, found in Rhodopseudomonas palustris (strain TIE-1).